A 318-amino-acid polypeptide reads, in one-letter code: Serine protease 41 (318 aa).

The N-terminal stretch at 1–19 (MGARGALLLALLLARAGLG) is a signal peptide. Residues 20-54 (KPGELGALQAGPGAARRPGGGGREEACGHREIHAL) constitute a propeptide that is removed on maturation. The Peptidase S1 domain occupies 55–297 (VAGGVESARG…YFHWIRRVMS (243 aa)). A disulfide bond links cysteine 80 and cysteine 96. Residues histidine 95 and aspartate 147 each act as charge relay system in the active site. 3 disulfide bridges follow: cysteine 181-cysteine 255, cysteine 215-cysteine 234, and cysteine 245-cysteine 273. N-linked (GlcNAc...) asparagine glycosylation is present at asparagine 211. Serine 249 serves as the catalytic Charge relay system. Asparagine 284 carries an N-linked (GlcNAc...) asparagine glycan. The GPI-anchor amidated serine moiety is linked to residue serine 299. A propeptide spans 300–318 (TPRPNPSQLLLLLALLWAP) (removed in mature form).

The protein belongs to the peptidase S1 family. Post-translationally, N-glycosylated.

Its subcellular location is the cell membrane. The polypeptide is Serine protease 41 (Homo sapiens (Human)).